The sequence spans 1499 residues: Multidrug resistance protein CDR2 (1499 aa).

Residues 1–511 (MSTANTSLSQ…NFLRMKGDPS (511 aa)) are Cytoplasmic-facing. One can recognise an ABC transporter 1 domain in the interval 148 to 402 (FTTEAINKLK…FENMGWKCPQ (255 aa)). The next 6 membrane-spanning stretches (helical) occupy residues 512–532 (IPLISILSQLVMGLILASVFF), 546–566 (GALFFSVLFNAFSSLLEILSL), 596–616 (LPVKLLMTMSFNIVYYFMVNL), 621–641 (GNFFFYWLMCASCTLVMSHMF), 660–680 (VFLLAMIIYAGFVLPIPYILG), and 763–783 (FGITVAFAVFFLGVYVALTEF). Residues 784–1193 (NKGAMQKGEI…TIVQDWRSPG (410 aa)) are Cytoplasmic-facing. In terms of domain architecture, ABC transporter 2 spans 857–1101 (FFWRDLTYQV…MINYFEKYGA (245 aa)). 893-900 (GASGAGKT) is an ATP binding site. Helical transmembrane passes span 1194-1214 (YIYSKLILVISSSLFIGFSFF), 1229-1249 (AVFMFFVPFTTFIDQMLPYFV), 1279-1299 (IPFQIVVGTISYFCWYYPVGL), 1315-1335 (LMWMLLTAFYVYTSTMGQLAI), 1354-1374 (LCLMFCGVLAGPNVIPGFWIF), and 1465-1485 (FGIFVAFIGINIILTIFFYWL).

The protein belongs to the ABC transporter superfamily. ABCG family. PDR (TC 3.A.1.205) subfamily.

The protein resides in the membrane. Functionally, multidrug efflux transporter. Confers resistance to azole antifungal agents, to other antifungals (terbinafine, amorolfine) and to a variety of metabolic inhibitors. The sequence is that of Multidrug resistance protein CDR2 (CDR2) from Candida albicans (strain SC5314 / ATCC MYA-2876) (Yeast).